A 442-amino-acid polypeptide reads, in one-letter code: MKPTIVLVGRPNVGKSTLFNRLTKTRDALVADQPGLTRDRHYGVGRVGDRDYLVVDTAGFDPVAKDGIMHEMARQAEQAIAEADVLLFLVDGRAGRTPHDDQIAAHLRRAGRPVVVVVNKAEGLDRATVAADFHALGLGAPLAVSAAHGDGVKALVELVLAPFPADDEVEAAEDAGPRVAIVGRPNVGKSTLVNTLLGEERVIAFDMPGTTRDAIAIPFERGGKQYTLIDTAGLRRRGKVFEAVEKFSVIKTLQAIQEANVVVLVLDAAQDISDQDAHIAGFVLDTGRALVVAINKWDAVDDYRRARLKEDMARKLAFLSFARFHQISALRAEGIAALLKSVDGAYAAAMSNLSTPRLTRTMQAAVAKQAPPRHGSARPKLRYAHQGGMNPPVIVIHGNALDHIPNSYVRFLERTFMEAFKLQGTPLRIQFRTAHNPYATKA.

EngA-type G domains lie at 3-167 (PTIV…PADD) and 177-350 (PRVA…AAAM). Residues 9-16 (GRPNVGKS), 56-60 (DTAGF), 119-122 (NKAE), 183-190 (GRPNVGKS), 230-234 (DTAGL), and 295-298 (NKWD) each bind GTP. Residues 351–435 (SNLSTPRLTR…PLRIQFRTAH (85 aa)) enclose the KH-like domain.

Belongs to the TRAFAC class TrmE-Era-EngA-EngB-Septin-like GTPase superfamily. EngA (Der) GTPase family. Associates with the 50S ribosomal subunit.

Its function is as follows. GTPase that plays an essential role in the late steps of ribosome biogenesis. The polypeptide is GTPase Der (Azoarcus sp. (strain BH72)).